We begin with the raw amino-acid sequence, 316 residues long: Aspartate carbamoyltransferase catalytic subunit (316 aa).

2 residues coordinate carbamoyl phosphate: arginine 66 and threonine 67. Residue lysine 94 coordinates L-aspartate. Carbamoyl phosphate contacts are provided by arginine 116, histidine 146, and glutamine 149. Arginine 180 and arginine 235 together coordinate L-aspartate. The carbamoyl phosphate site is built by glycine 276 and proline 277.

The protein belongs to the aspartate/ornithine carbamoyltransferase superfamily. ATCase family. As to quaternary structure, heterododecamer (2C3:3R2) of six catalytic PyrB chains organized as two trimers (C3), and six regulatory PyrI chains organized as three dimers (R2).

The catalysed reaction is carbamoyl phosphate + L-aspartate = N-carbamoyl-L-aspartate + phosphate + H(+). It participates in pyrimidine metabolism; UMP biosynthesis via de novo pathway; (S)-dihydroorotate from bicarbonate: step 2/3. In terms of biological role, catalyzes the condensation of carbamoyl phosphate and aspartate to form carbamoyl aspartate and inorganic phosphate, the committed step in the de novo pyrimidine nucleotide biosynthesis pathway. This is Aspartate carbamoyltransferase catalytic subunit from Stenotrophomonas maltophilia (strain K279a).